Reading from the N-terminus, the 204-residue chain is Guanylate kinase (204 aa).

The region spanning 4–182 (GLLYVISAPS…ALNQLRAIVQ (179 aa)) is the Guanylate kinase-like domain. An ATP-binding site is contributed by 11–18 (APSGAGKT).

This sequence belongs to the guanylate kinase family.

The protein localises to the cytoplasm. The catalysed reaction is GMP + ATP = GDP + ADP. Its function is as follows. Essential for recycling GMP and indirectly, cGMP. This Methylococcus capsulatus (strain ATCC 33009 / NCIMB 11132 / Bath) protein is Guanylate kinase.